A 194-amino-acid polypeptide reads, in one-letter code: Ribonuclease VapC1 (194 aa).

The PINc domain maps to Y34–A134. Mg(2+) is bound by residues D37 and D150.

This sequence belongs to the PINc/VapC protein family. Requires Mg(2+) as cofactor.

Functionally, toxic component of a type II toxin-antitoxin (TA) system. An RNase. This is Ribonuclease VapC1 from Thermoplasma acidophilum (strain ATCC 25905 / DSM 1728 / JCM 9062 / NBRC 15155 / AMRC-C165).